We begin with the raw amino-acid sequence, 424 residues long: Proline--tRNA ligase (424 aa).

It belongs to the class-II aminoacyl-tRNA synthetase family. ProS type 2 subfamily. Homodimer.

It is found in the cytoplasm. The enzyme catalyses tRNA(Pro) + L-proline + ATP = L-prolyl-tRNA(Pro) + AMP + diphosphate. Its function is as follows. Catalyzes the attachment of proline to tRNA(Pro) in a two-step reaction: proline is first activated by ATP to form Pro-AMP and then transferred to the acceptor end of tRNA(Pro). The protein is Proline--tRNA ligase of Ehrlichia chaffeensis (strain ATCC CRL-10679 / Arkansas).